The sequence spans 447 residues: Exodeoxyribonuclease 7 large subunit (447 aa).

The protein belongs to the XseA family. Heterooligomer composed of large and small subunits.

It localises to the cytoplasm. The catalysed reaction is Exonucleolytic cleavage in either 5'- to 3'- or 3'- to 5'-direction to yield nucleoside 5'-phosphates.. In terms of biological role, bidirectionally degrades single-stranded DNA into large acid-insoluble oligonucleotides, which are then degraded further into small acid-soluble oligonucleotides. The sequence is that of Exodeoxyribonuclease 7 large subunit from Geobacter sulfurreducens (strain ATCC 51573 / DSM 12127 / PCA).